Reading from the N-terminus, the 404-residue chain is Multidrug resistance protein MdtG (404 aa).

A run of 11 helical transmembrane segments spans residues 19 to 39 (LGCF…PLYV), 56 to 76 (LVFS…GGLA), 90 to 110 (LGMA…QFLI), 113 to 133 (ALLG…ATQA), 144 to 164 (TLST…GLLA), 171 to 191 (PVFF…FFFI), 222 to 242 (LFVT…ILTL), 254 to 274 (IAFI…LSAP), 288 to 308 (ILIV…FVQT), 317 to 337 (FLLG…LVYN), and 376 to 396 (AVFC…WNSL).

It belongs to the major facilitator superfamily. DHA1 family. MdtG (TC 2.A.1.2.20) subfamily.

It is found in the cell inner membrane. In Salmonella paratyphi A (strain ATCC 9150 / SARB42), this protein is Multidrug resistance protein MdtG.